Here is a 223-residue protein sequence, read N- to C-terminus: MGQKVHPYGFRLGVNKPWRSRWFVERDYDKLLVEDVHLKRELKEKLKAAGVSSVEVERPGNKLRLIIRTARPGIIIGRKGAEIEKLKADLQKRTNREVFIDILEVNKPELDAQLIAENIALQLEKRVGFRRAMRKAVDSALRFGCKGIKVRVSGRLNGNEIARSEWYLQGRLPLHTLRADIDYGFAEAHTTYGIIGVKTWVYRGDIYQQRRREPQAAVGTSVF.

In terms of domain architecture, KH type-2 spans leucine 38–asparagine 106.

It belongs to the universal ribosomal protein uS3 family. Part of the 30S ribosomal subunit. Forms a tight complex with proteins S10 and S14.

Functionally, binds the lower part of the 30S subunit head. Binds mRNA in the 70S ribosome, positioning it for translation. The chain is Small ribosomal subunit protein uS3 from Acidobacterium capsulatum (strain ATCC 51196 / DSM 11244 / BCRC 80197 / JCM 7670 / NBRC 15755 / NCIMB 13165 / 161).